Reading from the N-terminus, the 109-residue chain is Large ribosomal subunit protein uL24 (109 aa).

The interval 1 to 24 (MANVTTDIKRNDTVAVTSGKDKGK) is disordered.

Belongs to the universal ribosomal protein uL24 family. Part of the 50S ribosomal subunit.

One of two assembly initiator proteins, it binds directly to the 5'-end of the 23S rRNA, where it nucleates assembly of the 50S subunit. Functionally, one of the proteins that surrounds the polypeptide exit tunnel on the outside of the subunit. The protein is Large ribosomal subunit protein uL24 of Koribacter versatilis (strain Ellin345).